The chain runs to 2304 residues: Protein Ycf2 (2304 aa).

An ATP-binding site is contributed by 1637–1644 (GSIGTGRS).

The protein belongs to the Ycf2 family.

Its subcellular location is the plastid. The protein resides in the chloroplast stroma. In terms of biological role, probable ATPase of unknown function. Its presence in a non-photosynthetic plant (Epifagus virginiana) and experiments in tobacco indicate that it has an essential function which is probably not related to photosynthesis. The chain is Protein Ycf2 from Amborella trichopoda.